Reading from the N-terminus, the 231-residue chain is MTASLDHRFTEFLLESQALKFGEFTLKSGRKSPYFINAGAFNDGRKIARLGAFYAEKIVEEIEAGNLPKDVDTVFGPAYKGIPLGVSTAIALTSAHGMEVGYTFDRKEKKDHGDGGMMVGTQLADGMKVLLVDDVMTAGTAVREVIPKLKAEANVEVIGLVLSVDRMEKTKDSDTSAVKAVEAEFGFPVFAIANVKEIFEAGQRIQNADGTPYVTPEIKAAADAYLEQYGA.

Residues Lys-27, 79–80 (YK), Arg-106, Lys-107, Lys-110, His-112, and 133–141 (DDVMTAGTA) each bind 5-phospho-alpha-D-ribose 1-diphosphate. Residues Thr-137 and Arg-166 each contribute to the orotate site.

It belongs to the purine/pyrimidine phosphoribosyltransferase family. PyrE subfamily. In terms of assembly, homodimer. It depends on Mg(2+) as a cofactor.

The catalysed reaction is orotidine 5'-phosphate + diphosphate = orotate + 5-phospho-alpha-D-ribose 1-diphosphate. Its pathway is pyrimidine metabolism; UMP biosynthesis via de novo pathway; UMP from orotate: step 1/2. Its function is as follows. Catalyzes the transfer of a ribosyl phosphate group from 5-phosphoribose 1-diphosphate to orotate, leading to the formation of orotidine monophosphate (OMP). The chain is Orotate phosphoribosyltransferase from Bifidobacterium adolescentis (strain ATCC 15703 / DSM 20083 / NCTC 11814 / E194a).